Here is a 221-residue protein sequence, read N- to C-terminus: Type 3 secretion system stator protein (221 aa).

It belongs to the SctL stator family. The core secretion machinery of the T3SS is composed of approximately 20 different proteins, including cytoplasmic components, a base, an export apparatus and a needle. This subunit is part of the cytosolic complex. Interacts directly with YscN/SctN (T3SS ATPase) and YscQ/SctQ (the major sorting platform component).

It localises to the cytoplasm. In terms of biological role, component of the type III secretion system (T3SS), also called injectisome, which is used to inject bacterial effector proteins into eukaryotic host cells. Acts as a regulator of the YscN/SctN ATPase activity. In Yersinia pestis, this protein is Type 3 secretion system stator protein.